The following is a 287-amino-acid chain: ATP synthase gamma chain (287 aa).

It belongs to the ATPase gamma chain family. F-type ATPases have 2 components, CF(1) - the catalytic core - and CF(0) - the membrane proton channel. CF(1) has five subunits: alpha(3), beta(3), gamma(1), delta(1), epsilon(1). CF(0) has three main subunits: a, b and c.

The protein localises to the cell membrane. Its function is as follows. Produces ATP from ADP in the presence of a proton gradient across the membrane. The gamma chain is believed to be important in regulating ATPase activity and the flow of protons through the CF(0) complex. In Brevibacillus brevis (strain 47 / JCM 6285 / NBRC 100599), this protein is ATP synthase gamma chain.